Consider the following 147-residue polypeptide: Mucoricin (147 aa).

In terms of domain architecture, Ricin B-type lectin spans 4-143 (EEGRLFFIKS…VSANQRWELV (140 aa)).

This sequence belongs to the ribosome-inactivating protein family. Type 1 RIP subfamily.

The protein localises to the secreted. The enzyme catalyses Endohydrolysis of the N-glycosidic bond at one specific adenosine on the 28S rRNA.. N-glycosylase that inhibits protein synthesis in the host by depurinating ribosomal rRNA, and thus acts as a ribosomal inactivating protein (RIP). Promotes vascular permeability in the host and induces necrosis and apoptosis of host alveolar epithelial cells. The polypeptide is Mucoricin (Rhizopus delemar (strain RA 99-880 / ATCC MYA-4621 / FGSC 9543 / NRRL 43880) (Mucormycosis agent)).